The chain runs to 526 residues: Secreted triacylglycerol lipase LIP4 (526 aa).

A signal peptide spans 1–26 (MVRLSYVRFGVAWCIAIIIVSGFSNA). N-linked (GlcNAc...) asparagine glycosylation occurs at Asn186. Ser195 acts as the Nucleophile in catalysis. Asn228 carries N-linked (GlcNAc...) asparagine glycosylation. Active-site residues include Asp342 and His376. Asn377 is a glycosylation site (N-linked (GlcNAc...) asparagine). Residues 412 to 526 (TGPSASSSAG…TMPAPPLMER (115 aa)) form a disordered region. Low complexity-rich tracts occupy residues 413 to 423 (GPSASSSAGGP) and 430 to 457 (TGGHHTQSGSAHGGHSSEHAASSTHAPA). An N-linked (GlcNAc...) asparagine glycan is attached at Asn462. A compositionally biased stretch (low complexity) spans 480-490 (PSTGATSPAPS). Positions 516-526 (RTMPAPPLMER) are enriched in pro residues.

Belongs to the AB hydrolase superfamily. Lipase family. Class Lip subfamily.

It is found in the secreted. The catalysed reaction is a triacylglycerol + H2O = a diacylglycerol + a fatty acid + H(+). It carries out the reaction a monoacylglycerol + H2O = glycerol + a fatty acid + H(+). It catalyses the reaction a diacylglycerol + H2O = a monoacylglycerol + a fatty acid + H(+). Secreted lipase that hydrolyzes acylglycerol lipids such as triacylglycerols and consequently releases free fatty acid. Can hydrolyze 4-nitrophenyl palmitate to release 4-nitrophenol and palmitoic acid. Due to an absence of fatty acid synthase genes in Malassezia species, secretory lipases are essential for the yeast to generate free fatty acids from degradation of sebum and assimilate them as lipid sources for growth. Plays important roles not only in lipid metabolism but also in the immune response of host cells and pathogenesis. The protein is Secreted triacylglycerol lipase LIP4 of Malassezia furfur (Pityriasis versicolor infection agent).